Consider the following 114-residue polypeptide: NADH-ubiquinone oxidoreductase chain 3 (114 aa).

3 helical membrane passes run 3–23 (LITL…INTY), 52–72 (IQFF…VLLL), and 86–106 (TILL…YEWL).

Belongs to the complex I subunit 3 family.

It localises to the mitochondrion membrane. The catalysed reaction is a ubiquinone + NADH + 5 H(+)(in) = a ubiquinol + NAD(+) + 4 H(+)(out). Its function is as follows. Core subunit of the mitochondrial membrane respiratory chain NADH dehydrogenase (Complex I) that is believed to belong to the minimal assembly required for catalysis. Complex I functions in the transfer of electrons from NADH to the respiratory chain. The immediate electron acceptor for the enzyme is believed to be ubiquinone. In Lycodon semicarinatus (Ryukyu odd-tooth snake), this protein is NADH-ubiquinone oxidoreductase chain 3 (MT-ND3).